A 100-amino-acid polypeptide reads, in one-letter code: uncharacterized protein (100 aa).

This is an uncharacterized protein from Haemophilus influenzae (strain ATCC 51907 / DSM 11121 / KW20 / Rd).